A 137-amino-acid polypeptide reads, in one-letter code: Large ribosomal subunit protein uL16 (137 aa).

This sequence belongs to the universal ribosomal protein uL16 family. Part of the 50S ribosomal subunit.

Its function is as follows. Binds 23S rRNA and is also seen to make contacts with the A and possibly P site tRNAs. This Stutzerimonas stutzeri (strain A1501) (Pseudomonas stutzeri) protein is Large ribosomal subunit protein uL16.